A 444-amino-acid chain; its full sequence is Enolase (444 aa).

Substrate is bound by residues histidine 163 and glutamate 172. Glutamate 215 acts as the Proton donor in catalysis. Residues aspartate 250, glutamate 300, and aspartate 327 each contribute to the Mg(2+) site. 2 residues coordinate substrate: glutamate 300 and aspartate 327. Catalysis depends on lysine 352, which acts as the Proton acceptor. Residues 379 to 382 and lysine 403 contribute to the substrate site; that span reads SHRS.

It belongs to the enolase family. Homodimer. Mg(2+) is required as a cofactor.

Its subcellular location is the cytoplasm. It catalyses the reaction (2R)-2-phosphoglycerate = phosphoenolpyruvate + H2O. Its pathway is carbohydrate degradation; glycolysis; pyruvate from D-glyceraldehyde 3-phosphate: step 4/5. The sequence is that of Enolase (PGH1) from Mesembryanthemum crystallinum (Common ice plant).